We begin with the raw amino-acid sequence, 278 residues long: Small ribosomal subunit protein uS3 (278 aa).

The KH type-2 domain occupies 39 to 107 (LRKAISKKYV…KVQLNIVEIS (69 aa)). Residues 255–278 (AEIPAEEKPKRVVKKAENITKEEE) are disordered.

Belongs to the universal ribosomal protein uS3 family. As to quaternary structure, part of the 30S ribosomal subunit. Forms a tight complex with proteins S10 and S14.

Binds the lower part of the 30S subunit head. Binds mRNA in the 70S ribosome, positioning it for translation. This Dehalococcoides mccartyi (strain CBDB1) protein is Small ribosomal subunit protein uS3.